We begin with the raw amino-acid sequence, 121 residues long: Large ribosomal subunit protein bL12 (121 aa).

This sequence belongs to the bacterial ribosomal protein bL12 family. Homodimer. Part of the ribosomal stalk of the 50S ribosomal subunit. Forms a multimeric L10(L12)X complex, where L10 forms an elongated spine to which 2 to 4 L12 dimers bind in a sequential fashion. Binds GTP-bound translation factors.

Forms part of the ribosomal stalk which helps the ribosome interact with GTP-bound translation factors. Is thus essential for accurate translation. This chain is Large ribosomal subunit protein bL12, found in Pseudomonas fluorescens (strain Pf0-1).